The following is a 461-amino-acid chain: Fumarate hydratase class II (461 aa).

Substrate is bound by residues Ser97–Thr99, His127–Asp130, Ser137–Asn139, and Thr185. The active-site Proton donor/acceptor is His186. Ser316 is a catalytic residue. Substrate contacts are provided by residues Ser317 and Lys322–Asn324.

This sequence belongs to the class-II fumarase/aspartase family. Fumarase subfamily. Homotetramer.

Its subcellular location is the cytoplasm. It carries out the reaction (S)-malate = fumarate + H2O. It functions in the pathway carbohydrate metabolism; tricarboxylic acid cycle; (S)-malate from fumarate: step 1/1. Its function is as follows. Involved in the TCA cycle. Catalyzes the stereospecific interconversion of fumarate to L-malate. This is Fumarate hydratase class II from Staphylococcus aureus (strain COL).